Here is a 653-residue protein sequence, read N- to C-terminus: Exocyst complex component 7 (653 aa).

Residues 1-384 (MIPPQEASAR…TKNKLPGLIT (384 aa)) are SEC8 and ARHQ binding. Coiled coils occupy residues 5 to 42 (QEAS…TKNM) and 63 to 85 (VHKQ…SCLD). At Ser-133 the chain carries Phosphoserine. A disordered region spans residues 238–272 (FRKSSSSSGVPYSPAIPNKRKDTPTKKPIKRPGRD).

This sequence belongs to the EXO70 family. The exocyst complex is composed of EXOC1, EXOC2, EXOC3, EXOC4, EXOC5, EXOC6, EXOC7 and EXOC8. Interacts with ARHQ in a GTP-dependent manner. Interacts with RAB11FIP3.

The protein localises to the cytoplasm. The protein resides in the cytosol. It is found in the cell membrane. It localises to the midbody. Its subcellular location is the midbody ring. Functionally, component of the exocyst complex involved in the docking of exocytic vesicles with fusion sites on the plasma membrane. In adipocytes, plays a crucial role in targeting SLC2A4 vesicle to the plasma membrane in response to insulin, perhaps directing the vesicle to the precise site of fusion. It is required for neuron survival and plays an essential role in cortical development. This chain is Exocyst complex component 7 (Exoc7), found in Rattus norvegicus (Rat).